Consider the following 128-residue polypeptide: NADPH-dependent 7-cyano-7-deazaguanine reductase (128 aa).

Catalysis depends on C39, which acts as the Thioimide intermediate. The active-site Proton donor is the D46. Substrate is bound by residues 61–63 (IEL) and 80–81 (HE).

Belongs to the GTP cyclohydrolase I family. QueF type 1 subfamily.

Its subcellular location is the cytoplasm. The enzyme catalyses 7-aminomethyl-7-carbaguanine + 2 NADP(+) = 7-cyano-7-deazaguanine + 2 NADPH + 3 H(+). It functions in the pathway tRNA modification; tRNA-queuosine biosynthesis. In terms of biological role, catalyzes the NADPH-dependent reduction of 7-cyano-7-deazaguanine (preQ0) to 7-aminomethyl-7-deazaguanine (preQ1). The polypeptide is NADPH-dependent 7-cyano-7-deazaguanine reductase (Magnetococcus marinus (strain ATCC BAA-1437 / JCM 17883 / MC-1)).